We begin with the raw amino-acid sequence, 244 residues long: 3-deoxy-manno-octulosonate cytidylyltransferase (244 aa).

Belongs to the KdsB family.

Its subcellular location is the cytoplasm. It catalyses the reaction 3-deoxy-alpha-D-manno-oct-2-ulosonate + CTP = CMP-3-deoxy-beta-D-manno-octulosonate + diphosphate. It functions in the pathway nucleotide-sugar biosynthesis; CMP-3-deoxy-D-manno-octulosonate biosynthesis; CMP-3-deoxy-D-manno-octulosonate from 3-deoxy-D-manno-octulosonate and CTP: step 1/1. Its pathway is bacterial outer membrane biogenesis; lipopolysaccharide biosynthesis. In terms of biological role, activates KDO (a required 8-carbon sugar) for incorporation into bacterial lipopolysaccharide in Gram-negative bacteria. The protein is 3-deoxy-manno-octulosonate cytidylyltransferase of Rickettsia bellii (strain OSU 85-389).